The sequence spans 128 residues: Glycine cleavage system H protein (128 aa).

Residues 22 to 104 form the Lipoyl-binding domain; sequence TVLVGITDYA…YGEGWIFRLK (83 aa). Lysine 63 bears the N6-lipoyllysine mark.

This sequence belongs to the GcvH family. As to quaternary structure, the glycine cleavage system is composed of four proteins: P, T, L and H. Monomer. It depends on (R)-lipoate as a cofactor.

In terms of biological role, the glycine cleavage system catalyzes the degradation of glycine. The H protein shuttles the methylamine group of glycine from the P protein to the T protein. In Thermus thermophilus (strain ATCC 27634 / DSM 579 / HB8), this protein is Glycine cleavage system H protein.